The chain runs to 678 residues: DNA ligase (678 aa).

NAD(+)-binding positions include 47–51 (DSDYD), 96–97 (SL), and Glu-122. Residue Lys-124 is the N6-AMP-lysine intermediate of the active site. The NAD(+) site is built by Arg-145, Glu-182, Lys-300, and Lys-324. Zn(2+) is bound by residues Cys-418, Cys-421, Cys-436, and Cys-442. The BRCT domain maps to 602-678 (AHNESFTNKT…IFEEDLQNLL (77 aa)).

Belongs to the NAD-dependent DNA ligase family. LigA subfamily. Requires Mg(2+) as cofactor. Mn(2+) is required as a cofactor.

The catalysed reaction is NAD(+) + (deoxyribonucleotide)n-3'-hydroxyl + 5'-phospho-(deoxyribonucleotide)m = (deoxyribonucleotide)n+m + AMP + beta-nicotinamide D-nucleotide.. Its function is as follows. DNA ligase that catalyzes the formation of phosphodiester linkages between 5'-phosphoryl and 3'-hydroxyl groups in double-stranded DNA using NAD as a coenzyme and as the energy source for the reaction. It is essential for DNA replication and repair of damaged DNA. This is DNA ligase from Francisella philomiragia subsp. philomiragia (strain ATCC 25017 / CCUG 19701 / FSC 153 / O#319-036).